A 341-amino-acid polypeptide reads, in one-letter code: Cell wall mannoprotein PIR1 (341 aa).

A signal peptide spans 1–18 (MQYKKSLVASALVATSLA). A propeptide spanning residues 19–63 (AYAPKDPWSTLTPSATYKGGITDYSSTFGIAVEPIATTASSKAKR) is cleaved from the precursor. 8 PIR1/2/3 repeats span residues 64-82 (AAAI…TKTT), 83-101 (AAAV…TKTK), 102-120 (AAAV…TKTT), 126-144 (AAAV…TKTK), 145-163 (AAAV…TKTT), 164-182 (AAAV…TKTT), 183-201 (AAAV…TNTT), and 202-220 (VAPV…TLTS).

The protein belongs to the PIR protein family. Post-translationally, covalently linked to beta-1,3-glucan of the inner cell wall layer via an alkali-sensitive ester linkage between the gamma-carboxyl group of glutamic acids, arising from specific glutamines within the PIR1/2/3 repeats, and hydroxyl groups of glucoses of beta-1,3-glucan chains. In terms of processing, O-glycosylated. Extensively O-mannosylated.

Its subcellular location is the secreted. It localises to the cell wall. Functionally, component of the outer cell wall layer. Required for stability of the cell wall and for optimal growth. Required for resistance against several antifungal and cell wall-perturbing agents and for tolerance to heat shock. The polypeptide is Cell wall mannoprotein PIR1 (PIR1) (Saccharomyces cerevisiae (strain YJM789) (Baker's yeast)).